The chain runs to 703 residues: MFEDVFSDSGNTGNFDRGKKRRLTIIECGCDINMMIDLAKVADLVLMLIDASFGFEMEMFEFLNICQAHGFPKILGVLTHLDSFKHNKQLKKTKKRLKHRFWTEVYQDKVGLTHELVQSLISTYSTIDAKMASSRVTLLSNSKPLGSEAIDNQGVSLEFDQQQGSVCPSESEIYEAGAEDRMAGAPMAAAVQPAEVTVEVGEDLHMHQVRDREMPEVVEIRRSNCTNHCDLGDTSSYHTKVSTVHIMKKRNGGGSLNNYSSSIPPTPSTSQEDPQFSVPPTANTPTPVCKRSMRWSNLFTSEKGSDPDKERKAPENHADTIGSGRAIPIKQGMLLKRSGKWLKTWKKKYVTLCSNGVLTYYSSLGDYMKNIHKKEIDLRTSTIKVPGKWPSLATSACAPISSSKSNGLSKDMDTGLGDSICFSPGISSTTSPKLNPPPSPHANKKKHLKKKSTNNFMIVSATGQTWHFEATTYEERDAWVQAIQSQILASLQSCKSSKSKSQLTSQSEAMALQSIQNMRGNAHCVDCETQNPKWASLNLGVLMCIECSGIHRSFGTRLSRVRSLELDDWPVELRKVMSSIGNELANSIWEGSSQGQTKPSIKSTREEKEWWIRSKYEEKLFLAPLPCTELSLGQQLLRATTDEDLQTAILLLAHGSREEVNETCGEGDGCTALHLACRKGNVVLEQLLTGWTSWPEMPTGTQR.

Disordered regions lie at residues 249-287 (KRNGGGSLNNYSSSIPPTPSTSQEDPQFSVPPTANTPTP), 299-323 (FTSEKGSDPDKERKAPENHADTIGS), and 427-449 (SSTTSPKLNPPPSPHANKKKHLK). Residues 271-286 (QEDPQFSVPPTANTPT) are compositionally biased toward polar residues. Basic and acidic residues predominate over residues 303-318 (KGSDPDKERKAPENHA). The 162-residue stretch at 327 to 488 (IPIKQGMLLK…WVQAIQSQIL (162 aa)) folds into the PH domain. An Arf-GAP domain is found at 509-629 (AMALQSIQNM…LFLAPLPCTE (121 aa)). Residues 524–547 (CVDCETQNPKWASLNLGVLMCIEC) form a C4-type zinc finger. Residues 631–700 (SLGQQLLRAT…WTSWPEMPTG (70 aa)) form an ANK repeat.

It belongs to the centaurin gamma-like family.

Putative GTPase-activating protein. This chain is Arf-GAP with GTPase, ANK repeat and PH domain-containing protein 9 (AGAP9), found in Homo sapiens (Human).